We begin with the raw amino-acid sequence, 150 residues long: Probable histone H2A.7 (150 aa).

Over residues 1-12 the composition is skewed to basic residues; sequence MESTGKVKKAFG. 2 disordered regions span residues 1–27 and 129–150; these read MEST…SVSK and KSAT…PKKA. Residue Ser146 is modified to Phosphoserine. An SPKK motif motif is present at residues 146–149; sequence SPKK.

The protein belongs to the histone H2A family. The nucleosome is a histone octamer containing two molecules each of H2A, H2B, H3 and H4 assembled in one H3-H4 heterotetramer and two H2A-H2B heterodimers. The octamer wraps approximately 147 bp of DNA. In terms of processing, not ubiquitinated. In terms of tissue distribution, strong expression through-out the roots and leaves. Also found in meristems and dividing cells.

It localises to the nucleus. The protein localises to the chromosome. Functionally, core component of nucleosome. Nucleosomes wrap and compact DNA into chromatin, limiting DNA accessibility to the cellular machineries which require DNA as a template. Histones thereby play a central role in transcription regulation, DNA repair, DNA replication and chromosomal stability. DNA accessibility is regulated via a complex set of post-translational modifications of histones, also called histone code, and nucleosome remodeling. The protein is Probable histone H2A.7 of Arabidopsis thaliana (Mouse-ear cress).